A 956-amino-acid polypeptide reads, in one-letter code: Angiomotin-like protein 1 (956 aa).

Residues 197–246 (QSQFFRGQQQQQQQQGAVGHGYYMAGGTSQKSRTEGRPTVNRANSGQAHK) are disordered. A phosphoserine mark is found at S241 and S269. Residues 259–279 (RSLSERIMQLSLERNGAKQHL) are a coiled coil. Disordered stretches follow at residues 274–322 (GAKQ…QMMS), 382–405 (PSTM…LHSV), and 411–430 (LPMA…SQQL). The span at 282 to 294 (SGNGKGFKVGGGP) shows a compositional bias: gly residues. Residue S295 is modified to Phosphoserine. Polar residues predominate over residues 382 to 398 (PSTMQQHSPMSSQTSSA). Coiled coils occupy residues 438–639 (VERA…WLER) and 665–694 (ALLE…YLEE). The residue at position 720 (S720) is a Phosphoserine. A coiled-coil region spans residues 729–762 (SLEAHIWQEEEEVVQANRRCQDMEYTIKNLHAKI). Residues 773–823 (QQRSRKDAGKTDSSSLRPARSVPSIAAATGTHSRQTSLTSSQLAEEKKEEK) form a disordered region. Phosphoserine occurs at positions 793, 805, and 828. A compositionally biased stretch (polar residues) spans 802–815 (GTHSRQTSLTSSQL). 2 disordered regions span residues 841 to 880 (ASAP…TQTD) and 894 to 944 (PSRG…LHKP). Low complexity predominate over residues 852–866 (SALSSIASTTAASSA). S900 carries the phosphoserine modification. T902 is modified (phosphothreonine). S906 is modified (phosphoserine). The short motif at 953–956 (EVLI) is the PDZ-binding element.

Belongs to the angiomotin family. Polyubiquitinated by NEDD4, leading to proteasomal degradation.

It localises to the cell junction. The protein localises to the tight junction. Its function is as follows. Inhibits the Wnt/beta-catenin signaling pathway, probably by recruiting CTNNB1 to recycling endosomes and hence preventing its translocation to the nucleus. The polypeptide is Angiomotin-like protein 1 (AMOTL1) (Homo sapiens (Human)).